We begin with the raw amino-acid sequence, 149 residues long: Transcriptional repressor NrdR (149 aa).

A zinc finger spans residues 3 to 34; it reads CPFCSATDTKVIDSRLVADGHQVRRRRECAEC. Residues 49-139 form the ATP-cone domain; it reads PRVVKQDGSR…VYRAFEDVSE (91 aa).

It belongs to the NrdR family. It depends on Zn(2+) as a cofactor.

Functionally, negatively regulates transcription of bacterial ribonucleotide reductase nrd genes and operons by binding to NrdR-boxes. This Shewanella woodyi (strain ATCC 51908 / MS32) protein is Transcriptional repressor NrdR.